The chain runs to 508 residues: Potassium/proton antiporter CemA (508 aa).

The next 5 membrane-spanning stretches (helical) occupy residues 66–86 (LFII…LNLL), 282–302 (YQAL…WIIS), 386–406 (ILHL…FILG), 433–453 (ILLL…EVVI), and 468–488 (IISC…KYWI).

The protein belongs to the CemA family.

It is found in the plastid. Its subcellular location is the chloroplast inner membrane. The catalysed reaction is K(+)(in) + H(+)(out) = K(+)(out) + H(+)(in). Contributes to K(+)/H(+) antiport activity by supporting proton efflux to control proton extrusion and homeostasis in chloroplasts in a light-dependent manner to modulate photosynthesis. Prevents excessive induction of non-photochemical quenching (NPQ) under continuous-light conditions. Indirectly promotes efficient inorganic carbon uptake into chloroplasts. This is Potassium/proton antiporter CemA from Anthoceros angustus (Hornwort).